We begin with the raw amino-acid sequence, 287 residues long: NH(3)-dependent NAD(+) synthetase (287 aa).

Position 53 to 60 (53 to 60) interacts with ATP; the sequence is GISGGQDS. D59 serves as a coordination point for Mg(2+). Residue R146 coordinates deamido-NAD(+). T166 contributes to the ATP binding site. E171 lines the Mg(2+) pocket. K179 and D186 together coordinate deamido-NAD(+). ATP contacts are provided by K195 and T217. Deamido-NAD(+) is bound at residue 266–267; it reads HK.

The protein belongs to the NAD synthetase family. In terms of assembly, homodimer.

It catalyses the reaction deamido-NAD(+) + NH4(+) + ATP = AMP + diphosphate + NAD(+) + H(+). It participates in cofactor biosynthesis; NAD(+) biosynthesis; NAD(+) from deamido-NAD(+) (ammonia route): step 1/1. Catalyzes the ATP-dependent amidation of deamido-NAD to form NAD. Uses ammonia as a nitrogen source. The protein is NH(3)-dependent NAD(+) synthetase of Deinococcus radiodurans (strain ATCC 13939 / DSM 20539 / JCM 16871 / CCUG 27074 / LMG 4051 / NBRC 15346 / NCIMB 9279 / VKM B-1422 / R1).